A 165-amino-acid polypeptide reads, in one-letter code: Phosphopantetheine adenylyltransferase (165 aa).

Thr11 contacts substrate. Residues 11–12 (TF) and His19 each bind ATP. Positions 43, 79, and 93 each coordinate substrate. ATP contacts are provided by residues Glu104 and 128-134 (LEPLNST).

Belongs to the bacterial CoaD family. As to quaternary structure, homohexamer. The cofactor is Mg(2+).

The protein localises to the cytoplasm. The enzyme catalyses (R)-4'-phosphopantetheine + ATP + H(+) = 3'-dephospho-CoA + diphosphate. Its pathway is cofactor biosynthesis; coenzyme A biosynthesis; CoA from (R)-pantothenate: step 4/5. Reversibly transfers an adenylyl group from ATP to 4'-phosphopantetheine, yielding dephospho-CoA (dPCoA) and pyrophosphate. This Lactococcus lactis subsp. lactis (strain IL1403) (Streptococcus lactis) protein is Phosphopantetheine adenylyltransferase.